Reading from the N-terminus, the 75-residue chain is Mating pheromone Er-1/Er-3 (75 aa).

The signal sequence occupies residues Met1–Ala19. Residues Phe20 to Gly35 constitute a propeptide that is removed on maturation. 3 disulfides stabilise this stretch: Cys38-Cys54, Cys45-Cys71, and Cys50-Cys63.

Homodimer.

It localises to the secreted. Its subcellular location is the cell membrane. Mating ciliate pheromones (or gamones) are diffusible extracellular communication signals that distinguish different intraspecific classes of cells commonly referred to as 'mating types'. They prepare the latter for conjugation by changing their cell surface properties. The membrane-bound form promotes inter-cellular communication and adhesion for mating pair formation and may act as binding site for the secreted form. This is Mating pheromone Er-1/Er-3 (MAT1) from Euplotes raikovi.